Here is a 690-residue protein sequence, read N- to C-terminus: Glycine--tRNA ligase beta subunit (690 aa).

It belongs to the class-II aminoacyl-tRNA synthetase family. As to quaternary structure, tetramer of two alpha and two beta subunits.

Its subcellular location is the cytoplasm. The enzyme catalyses tRNA(Gly) + glycine + ATP = glycyl-tRNA(Gly) + AMP + diphosphate. This Proteus mirabilis (strain HI4320) protein is Glycine--tRNA ligase beta subunit.